Reading from the N-terminus, the 457-residue chain is MELKRPFKIFGTDGIRGRANKSPMVPEIALALGRAAGQLLSRLGKSRVVIGKDTRLSCYVFENALIAGLCSMGVDTLMVGPLPTPGVAFITRAYRADAGIVISASHNPYYDNGIKLFDSQGFKLPDSWEAEMEAMIAKNHFDEELPADDDIGKNTKIIDADGRYIEFVKATFPRKISLKNLKIVLDCANGAGYKVAPLVFKELDATVFTCGVTPNGLNINSQCGSMHPETAQKAVIDNRADVGIALDGDADRVVMIDENAQIVDGDTMLAICARDMFKQKLLKNNRVVGTVMSNLGFIKAMECLGVEVIKSQVGDRYVIQDMLKYDANLGGEQSGHVIFLDHNTTGDGLVCALQVLRIMIETDSKLSDLASFVQRYPQTCLNIKVSSKPSLDSIERLKEVIAQVEEILGNSGRVLVRYSGTENTCRVMVEGPKYKQVIQLANQIADIVQEEIGLSVS.

The Phosphoserine intermediate role is filled by Ser-105. Residues Ser-105, Asp-247, Asp-249, and Asp-251 each coordinate Mg(2+). Ser-105 carries the post-translational modification Phosphoserine.

The protein belongs to the phosphohexose mutase family. Mg(2+) is required as a cofactor. In terms of processing, activated by phosphorylation.

The catalysed reaction is alpha-D-glucosamine 1-phosphate = D-glucosamine 6-phosphate. In terms of biological role, catalyzes the conversion of glucosamine-6-phosphate to glucosamine-1-phosphate. In Protochlamydia amoebophila (strain UWE25), this protein is Phosphoglucosamine mutase.